Here is a 125-residue protein sequence, read N- to C-terminus: Small ribosomal subunit protein uS13 (125 aa).

Belongs to the universal ribosomal protein uS13 family. In terms of assembly, part of the 30S ribosomal subunit. Forms a loose heterodimer with protein S19. Forms two bridges to the 50S subunit in the 70S ribosome.

In terms of biological role, located at the top of the head of the 30S subunit, it contacts several helices of the 16S rRNA. In the 70S ribosome it contacts the 23S rRNA (bridge B1a) and protein L5 of the 50S subunit (bridge B1b), connecting the 2 subunits; these bridges are implicated in subunit movement. Contacts the tRNAs in the A and P-sites. The sequence is that of Small ribosomal subunit protein uS13 from Rickettsia rickettsii (strain Iowa).